The primary structure comprises 572 residues: Probable lysosomal cobalamin transporter (572 aa).

9 helical membrane passes run 8–28, 40–60, 95–115, 145–165, 188–208, 314–334, 374–394, 421–441, and 499–519; these read VIWF…SVFI, FVTF…MLLP, IIYY…IPFA, TLTF…APMM, AFTF…AFYT, GGFC…MTVV, IIFA…VVAV, AVLT…LVPG, and VALN…LFLA. The interval 522-544 is disordered; the sequence is GRRRGRGRESVSKHQKKRQSYMR.

The protein belongs to the LIMR family. LMBRD1 subfamily.

It localises to the lysosome membrane. In terms of biological role, probable lysosomal cobalamin transporter. Required to export cobalamin from lysosomes allowing its conversion to cofactors. The sequence is that of Probable lysosomal cobalamin transporter from Aspergillus fumigatus (strain ATCC MYA-4609 / CBS 101355 / FGSC A1100 / Af293) (Neosartorya fumigata).